A 452-amino-acid polypeptide reads, in one-letter code: Gamma-aminobutyric acid receptor subunit delta (452 aa).

The first 24 residues, 1–24 (MDAPARLLAPLLLLCAQQLRGTRA), serve as a signal peptide directing secretion. The Extracellular portion of the chain corresponds to 25–251 (MNDIGDYVGS…HLRRNRGVYI (227 aa)). N-linked (GlcNAc...) asparagine glycans are attached at residues Asn-103 and Asn-106. An intrachain disulfide couples Cys-164 to Cys-178. A helical transmembrane segment spans residues 252–271 (IQSYMPSVLLVAMSWVSFWI). Residues 272–275 (SQAA) lie on the Cytoplasmic side of the membrane. The helical transmembrane segment at 276–298 (VPARVSLGITTVLTMTTLMVSAR) threads the bilayer. The Extracellular portion of the chain corresponds to 299–308 (SSLPRASAIK). Residues 309–331 (ALDVYFWICYVFVFAALVEYAFA) form a helical membrane-spanning segment. Over 332 to 426 (HFNADYRKKQ…ARLRPIDADT (95 aa)) the chain is Cytoplasmic. Ser-390 is subject to Phosphoserine. A helical membrane pass occupies residues 427 to 449 (IDIYARAVFPAAFAAVNVIYWAA). Topologically, residues 450–452 (YAM) are extracellular.

It belongs to the ligand-gated ion channel (TC 1.A.9) family. Gamma-aminobutyric acid receptor (TC 1.A.9.5) subfamily. GABRD sub-subfamily. In terms of assembly, heteropentamer, formed by a combination of alpha (GABRA1-6), beta (GABRB1-3), gamma (GABRG1-3), delta (GABRD), epsilon (GABRE), rho (GABRR1-3), pi (GABRP) and theta (GABRQ) chains, each subunit exhibiting distinct physiological and pharmacological properties.

It is found in the cell membrane. It carries out the reaction chloride(in) = chloride(out). Functionally, delta subunit of the heteropentameric ligand-gated chloride channel gated by gamma-aminobutyric acid (GABA), a major inhibitory neurotransmitter in the brain. GABA-gated chloride channels, also named GABA(A) receptors (GABAAR), consist of five subunits arranged around a central pore and contain GABA active binding site(s) located at the alpha and beta subunit interface(s). When activated by GABA, GABAARs selectively allow the flow of chloride anions across the cell membrane down their electrochemical gradient. GABAARs containing delta/GABRD subunits are predominantly located in extrasynaptic or perisynaptic positions on hippocampus and cerebellar granule cells, and contribute to the tonic GABAergic inhibition. GABAAR containing alpha-4-beta-3-delta subunits can simultaneously bind GABA and histamine where histamine binds at the interface of two neighboring beta subunits, which may be involved in the regulation of sleep and wakefulness. The sequence is that of Gamma-aminobutyric acid receptor subunit delta from Homo sapiens (Human).